A 192-amino-acid polypeptide reads, in one-letter code: UPF0149 protein YPO0911/y3298/YP_3608 (192 aa).

The protein belongs to the UPF0149 family.

The protein is UPF0149 protein YPO0911/y3298/YP_3608 of Yersinia pestis.